The following is an 899-amino-acid chain: Translation initiation factor IF-2 (899 aa).

Disordered stretches follow at residues 31 to 227 (KKAE…ATEQ) and 240 to 310 (VTTS…GFDK). Polar residues-rich tracts occupy residues 36 to 47 (NVSQTEKQSLLS) and 73 to 87 (STLSVAGTGGKSKSV). Composition is skewed to basic and acidic residues over residues 101–173 (SALE…EKAK), 181–219 (AKSETELLQLRREEEAKRKAEEDSQRQLEEARKMAETNE), and 247–261 (RAAEDEQDRKEETTG). Positions 296–308 (PQVNAPTSMQQGF) are enriched in polar residues. Residues 398 to 565 (SRAPVVTIMG…AILLQSEILE (168 aa)) form the tr-type G domain. A G1 region spans residues 407–414 (GHVDHGKT). Position 407 to 414 (407 to 414 (GHVDHGKT)) interacts with GTP. The segment at 432-436 (GITQH) is G2. The G3 stretch occupies residues 453 to 456 (DTPG). GTP contacts are provided by residues 453–457 (DTPGH) and 507–510 (NKID). Residues 507-510 (NKID) are G4. A G5 region spans residues 543-545 (SAK).

Belongs to the TRAFAC class translation factor GTPase superfamily. Classic translation factor GTPase family. IF-2 subfamily.

It is found in the cytoplasm. One of the essential components for the initiation of protein synthesis. Protects formylmethionyl-tRNA from spontaneous hydrolysis and promotes its binding to the 30S ribosomal subunits. Also involved in the hydrolysis of GTP during the formation of the 70S ribosomal complex. This is Translation initiation factor IF-2 from Photobacterium profundum (strain SS9).